The primary structure comprises 284 residues: Probable endonuclease 4 (284 aa).

Histidine 66, histidine 106, glutamate 142, aspartate 176, histidine 179, histidine 213, aspartate 226, histidine 228, and glutamate 258 together coordinate Zn(2+).

Belongs to the AP endonuclease 2 family. It depends on Zn(2+) as a cofactor.

It carries out the reaction Endonucleolytic cleavage to 5'-phosphooligonucleotide end-products.. In terms of biological role, endonuclease IV plays a role in DNA repair. It cleaves phosphodiester bonds at apurinic or apyrimidinic (AP) sites, generating a 3'-hydroxyl group and a 5'-terminal sugar phosphate. The protein is Probable endonuclease 4 of Natranaerobius thermophilus (strain ATCC BAA-1301 / DSM 18059 / JW/NM-WN-LF).